Here is a 153-residue protein sequence, read N- to C-terminus: Pheromone-binding protein Gp-9 (153 aa).

An N-terminal signal peptide occupies residues 1 to 19 (MKTFVLHIFIFALVAFASA). Intrachain disulfides connect cysteine 37–cysteine 77, cysteine 73–cysteine 129, and cysteine 118–cysteine 138.

It belongs to the PBP/GOBP family. Homodimer.

The protein resides in the secreted. Colony queen number, a major feature of social organization, is associated with worker genotype for Gp-9. Colonies are headed by either a single reproductive queen (monogyne form) or multiple queens (polygyne form). Differences in worker Gp-9 genotypes between social forms may cause differences in workers' abilities to recognize queens and regulate their numbers. This is Pheromone-binding protein Gp-9 from Solenopsis pusillignis (Fire ant).